The chain runs to 316 residues: UDP-N-acetylenolpyruvoylglucosamine reductase (316 aa).

The region spanning 30 to 194 (VGGEADYLVF…LSVKFALAPG (165 aa)) is the FAD-binding PCMH-type domain. Residue Arg173 is part of the active site. Ser223 (proton donor) is an active-site residue. Glu293 is an active-site residue.

It belongs to the MurB family. The cofactor is FAD.

The protein localises to the cytoplasm. The catalysed reaction is UDP-N-acetyl-alpha-D-muramate + NADP(+) = UDP-N-acetyl-3-O-(1-carboxyvinyl)-alpha-D-glucosamine + NADPH + H(+). It participates in cell wall biogenesis; peptidoglycan biosynthesis. In terms of biological role, cell wall formation. In Streptococcus pneumoniae serotype 2 (strain D39 / NCTC 7466), this protein is UDP-N-acetylenolpyruvoylglucosamine reductase.